The primary structure comprises 194 residues: MIARLSGILVEKTPPQVVIDCHGVGYECEVPMSTFYNLPATGEKVVLLTQFIVREDAQLLYGFGSDQERATFRQLLKVNGVGAKSALAILSGLSVDDLAQAVALQETGLLIKVPGIGKKTAERLLLELKDKFAIDGGTALAGSNPAKSASSDVLNALLALGYNEREALAAVKQLPADIAVAEGIKLSLKSLSKT.

The tract at residues 1–64 (MIARLSGILV…EDAQLLYGFG (64 aa)) is domain I. Residues 65–141 (SDQERATFRQ…FAIDGGTALA (77 aa)) form a domain II region. Residues 141 to 144 (AGSN) form a flexible linker region. Residues 145-194 (PAKSASSDVLNALLALGYNEREALAAVKQLPADIAVAEGIKLSLKSLSKT) are domain III.

Belongs to the RuvA family. Homotetramer. Forms an RuvA(8)-RuvB(12)-Holliday junction (HJ) complex. HJ DNA is sandwiched between 2 RuvA tetramers; dsDNA enters through RuvA and exits via RuvB. An RuvB hexamer assembles on each DNA strand where it exits the tetramer. Each RuvB hexamer is contacted by two RuvA subunits (via domain III) on 2 adjacent RuvB subunits; this complex drives branch migration. In the full resolvosome a probable DNA-RuvA(4)-RuvB(12)-RuvC(2) complex forms which resolves the HJ.

It is found in the cytoplasm. In terms of biological role, the RuvA-RuvB-RuvC complex processes Holliday junction (HJ) DNA during genetic recombination and DNA repair, while the RuvA-RuvB complex plays an important role in the rescue of blocked DNA replication forks via replication fork reversal (RFR). RuvA specifically binds to HJ cruciform DNA, conferring on it an open structure. The RuvB hexamer acts as an ATP-dependent pump, pulling dsDNA into and through the RuvAB complex. HJ branch migration allows RuvC to scan DNA until it finds its consensus sequence, where it cleaves and resolves the cruciform DNA. This is Holliday junction branch migration complex subunit RuvA from Methylobacillus flagellatus (strain ATCC 51484 / DSM 6875 / VKM B-1610 / KT).